The sequence spans 425 residues: Rho GTPase-activating protein 8 (425 aa).

Residues 13–168 form the CRAL-TRIO domain; the sequence is PFYDVARHGI…EVVRYDEKLQ (156 aa). The segment at 169–192 is disordered; sequence NLHKGQPPPPTKTPPPRPPLPTQQ. Positions 174 to 189 are enriched in pro residues; the sequence is QPPPPTKTPPPRPPLP. The Rho-GAP domain occupies 195 to 381; sequence VSLQYLRDKN…LLIEYYDKVF (187 aa).

In terms of tissue distribution, highly expressed in skeletal muscle, lung and testis, and at lower levels in kidney, stomach and colon. Not detected in heart, liver, spleen, breast, brain, neonatal head or pancreas.

GTPase activator for the Rho-type GTPases by converting them to an inactive GDP-bound state. This chain is Rho GTPase-activating protein 8 (Arhgap8), found in Mus musculus (Mouse).